Consider the following 370-residue polypeptide: DNA replication and repair protein RecF (370 aa).

30-37 contacts ATP; that stretch reads GENAQGKT.

This sequence belongs to the RecF family.

It localises to the cytoplasm. Functionally, the RecF protein is involved in DNA metabolism; it is required for DNA replication and normal SOS inducibility. RecF binds preferentially to single-stranded, linear DNA. It also seems to bind ATP. The sequence is that of DNA replication and repair protein RecF from Staphylococcus aureus (strain USA300).